Reading from the N-terminus, the 601-residue chain is Elongation factor 4 (601 aa).

The 182-residue stretch at 8 to 189 (EQIRNFGIIA…LIVRKAPPPK (182 aa)) folds into the tr-type G domain. 20 to 25 (DHGKST) is a binding site for GTP.

The protein belongs to the TRAFAC class translation factor GTPase superfamily. Classic translation factor GTPase family. LepA subfamily.

It is found in the cell membrane. The enzyme catalyses GTP + H2O = GDP + phosphate + H(+). In terms of biological role, required for accurate and efficient protein synthesis under certain stress conditions. May act as a fidelity factor of the translation reaction, by catalyzing a one-codon backward translocation of tRNAs on improperly translocated ribosomes. Back-translocation proceeds from a post-translocation (POST) complex to a pre-translocation (PRE) complex, thus giving elongation factor G a second chance to translocate the tRNAs correctly. Binds to ribosomes in a GTP-dependent manner. This chain is Elongation factor 4, found in Tropheryma whipplei (strain TW08/27) (Whipple's bacillus).